A 201-amino-acid polypeptide reads, in one-letter code: Ubiquinone biosynthesis accessory factor UbiJ (201 aa).

The region spanning 15 to 112 is the SCP2 domain; sequence LNTFLYRSPA…QVVQNFVALA (98 aa).

Belongs to the UbiJ family. As to quaternary structure, component of the Ubi complex metabolon, which regroups five ubiquinone biosynthesis proteins (UbiE, UbiF, UbiG, UbiH and UbiI) and two accessory factors (UbiK and the lipid-binding protein UbiJ). Interacts with UbiK and forms a complex composed of 2 UbiK subunits and 1 UbiJ subunit. The UbiK-UbiJ complex interacts with palmitoleic acid.

It localises to the cytoplasm. It functions in the pathway cofactor biosynthesis; ubiquinone biosynthesis. Its function is as follows. Required for ubiquinone (coenzyme Q) biosynthesis under aerobic conditions. Binds hydrophobic ubiquinone biosynthetic intermediates via its SCP2 domain and is essential for the stability of the Ubi complex. May constitute a docking platform where Ubi enzymes assemble and access their SCP2-bound polyprenyl substrates. The protein is Ubiquinone biosynthesis accessory factor UbiJ of Escherichia coli (strain K12).